The sequence spans 639 residues: UPF0313 protein CLJ_B0249 (639 aa).

The 272-residue stretch at 295–566 (AIKEVKFSIT…RMQRSLLQFS (272 aa)) folds into the Radical SAM core domain. [4Fe-4S] cluster contacts are provided by Cys-309, Cys-313, and Cys-316. The tract at residues 597 to 639 (YNKPYKKSHKKNNAKNKNNNYNKNKDVSKKNKKNSLSKHKKRK) is disordered. Composition is skewed to basic residues over residues 600–610 (PYKKSHKKNNA) and 626–639 (KNKK…KKRK).

This sequence belongs to the UPF0313 family. The cofactor is [4Fe-4S] cluster.

This Clostridium botulinum (strain 657 / Type Ba4) protein is UPF0313 protein CLJ_B0249.